The following is a 263-amino-acid chain: Leukocyte-associated immunoglobulin-like receptor 1 (263 aa).

The first 21 residues, 1–21 (MSLHPVILLVLVLCLGWKINT), serve as a signal peptide directing secretion. The Extracellular segment spans residues 22 to 144 (QEGSLPDITI…TSWLKTYSIY (123 aa)). The Ig-like C2-type domain occupies 27–115 (PDITIFPNSS…TWSERSKTLE (89 aa)). Residues asparagine 34 and asparagine 90 are each glycosylated (N-linked (GlcNAc...) asparagine). Cysteine 49 and cysteine 99 are disulfide-bonded. Residues 145-165 (IFTVVSVIFLLCLSALLFCFL) form a helical membrane-spanning segment. The Cytoplasmic portion of the chain corresponds to 166–263 (RHRQKKQGLP…SSTYAAIIRH (98 aa)). 2 short sequence motifs (ITIM motif) span residues 226–231 (VTYIQL) and 255–260 (STYAAI). Phosphotyrosine occurs at positions 228 and 257.

Interacts with SH2 domains of tyrosine-protein phosphatases PTPN6 and PTPN11. The interaction with PTPN6 is constitutive. Interacts with the SH2 domain of CSK. Binds with high affinity to extracellular matrix collagens, the interaction is functionally important. In terms of processing, phosphorylation at Tyr-228 and Tyr-257 activates it. May be phosphorylated by LCK. Post-translationally, N-glycosylated. As to expression, expressed in lymphoid organs and in cell lines of hemopoietic origin.

Its subcellular location is the cell membrane. Its function is as follows. Functions as an inhibitory receptor that plays a constitutive negative regulatory role on cytolytic function of natural killer (NK) cells, B-cells and T-cells. Activation by Tyr phosphorylation results in recruitment and activation of the phosphatases PTPN6 and PTPN11. It also reduces the increase of intracellular calcium evoked by B-cell receptor ligation. May also play its inhibitory role independently of SH2-containing phosphatases. Modulates cytokine production in CD4+ T-cells, down-regulating IL2 and IFNG production while inducing secretion of transforming growth factor beta. Also down-regulates IgG and IgE production in B-cells as well as IL8, IL10 and TNF secretion. Inhibits proliferation and induces apoptosis in myeloid leukemia cell lines as well as prevents nuclear translocation of NF-kappa-B p65 subunit/RELA and phosphorylation of I-kappa-B alpha/CHUK in these cells. Inhibits the differentiation of peripheral blood precursors towards dendritic cells. This chain is Leukocyte-associated immunoglobulin-like receptor 1 (Lair1), found in Mus musculus (Mouse).